The sequence spans 80 residues: Acyl carrier protein (80 aa).

Residues 4–79 (DATLEKVRSI…DAVKYIEDKQ (76 aa)) enclose the Carrier domain. Position 39 is an O-(pantetheine 4'-phosphoryl)serine (S39).

The protein belongs to the acyl carrier protein (ACP) family. Post-translationally, 4'-phosphopantetheine is transferred from CoA to a specific serine of apo-ACP by AcpS. This modification is essential for activity because fatty acids are bound in thioester linkage to the sulfhydryl of the prosthetic group.

The protein localises to the cytoplasm. It participates in lipid metabolism; fatty acid biosynthesis. Carrier of the growing fatty acid chain in fatty acid biosynthesis. The protein is Acyl carrier protein of Prochlorococcus marinus (strain MIT 9211).